Consider the following 253-residue polypeptide: Probable transcriptional regulatory protein slr0989 (253 aa).

The tract at residues 1 to 22 (MGGRKWQSIKRQKARVDAQKGK) is disordered.

Belongs to the TACO1 family.

The protein resides in the cytoplasm. The sequence is that of Probable transcriptional regulatory protein slr0989 from Synechocystis sp. (strain ATCC 27184 / PCC 6803 / Kazusa).